Consider the following 132-residue polypeptide: MAPAKEIWAVGRRKTSVARAKIKEGSGKITVNHKDIKDYLQNRKAIIEEAIRPLSLLNVQDKYDLNLNVTGGGTTGQVGAIRHALARAICRIKPEFRPAVKKEGFLTRDPRMVERKKYGLHKARRGTQFSKR.

The protein belongs to the universal ribosomal protein uS9 family.

In Leptospira interrogans serogroup Icterohaemorrhagiae serovar copenhageni (strain Fiocruz L1-130), this protein is Small ribosomal subunit protein uS9.